Reading from the N-terminus, the 342-residue chain is Ubiquitin fusion degradation protein 1 homolog (342 aa).

Disordered regions lie at residues 245–276 (FGGA…SNAA) and 318–342 (EKEA…RGAR). Polar residues predominate over residues 259–275 (SSSVSLSDGTGVSTSNA).

The protein belongs to the UFD1 family. As to quaternary structure, forms a complex composed of ubxn-3, ufd-1, npl-4.1 and cdc-48.1; within the complex interacts with cdc-48.1. Interacts with cdc-48.2. Interacts with npl-4.1 and/or npl-4.2.

The protein resides in the cytoplasm. It localises to the nucleus. Its function is as follows. Functions at a post-ubiquitination step in the ubiquitin fusion degradation (UFD) pathway. In association with npl-4.1 and/or npl-4.2 and ATPase cdc-48.1 and/or cdc-48.2, involved in the cytoplasmic elimination of misfolded proteins exported from the ER. This pathway, known as ERAD, prevents the activation of the unfolded protein response (UPR) caused by the accumulation of misfolded proteins in the ER. During S phase and in association with npl-4.1 and/or npl-4.2, cdc-48.1 and/or cdc-48.2 and ubxn-3, ensures the degradation of DNA licensing factor cdt-1 after the initiation of DNA replication and thus the disassembly of the DNA replication CMG helicase complex by promoting the dissociation from chromatin of several of its components including cdc-45 and sld-5. Regulates ubxn-3 nuclear localization during S phase. This chain is Ubiquitin fusion degradation protein 1 homolog (ufd-1), found in Caenorhabditis elegans.